The following is an 865-amino-acid chain: Bifunctional uridylyltransferase/uridylyl-removing enzyme (865 aa).

Residues Met-1 to Leu-318 form a uridylyltransferase region. The tract at residues Ile-319–Leu-675 is uridylyl-removing. Residues Val-437–Leu-559 enclose the HD domain. 2 consecutive ACT domains span residues Gln-676–His-762 and Arg-789–Ala-865. A disordered region spans residues Asp-747–Arg-767. Over residues Ala-751 to Arg-767 the composition is skewed to basic residues.

It belongs to the GlnD family. Mg(2+) serves as cofactor.

The catalysed reaction is [protein-PII]-L-tyrosine + UTP = [protein-PII]-uridylyl-L-tyrosine + diphosphate. It carries out the reaction [protein-PII]-uridylyl-L-tyrosine + H2O = [protein-PII]-L-tyrosine + UMP + H(+). Uridylyltransferase (UTase) activity is inhibited by glutamine, while glutamine activates uridylyl-removing (UR) activity. Modifies, by uridylylation and deuridylylation, the PII regulatory proteins (GlnB and homologs), in response to the nitrogen status of the cell that GlnD senses through the glutamine level. Under low glutamine levels, catalyzes the conversion of the PII proteins and UTP to PII-UMP and PPi, while under higher glutamine levels, GlnD hydrolyzes PII-UMP to PII and UMP (deuridylylation). Thus, controls uridylylation state and activity of the PII proteins, and plays an important role in the regulation of nitrogen assimilation and metabolism. This is Bifunctional uridylyltransferase/uridylyl-removing enzyme from Bordetella bronchiseptica (strain ATCC BAA-588 / NCTC 13252 / RB50) (Alcaligenes bronchisepticus).